A 233-amino-acid polypeptide reads, in one-letter code: Small ribosomal subunit protein uS2 (233 aa).

The protein belongs to the universal ribosomal protein uS2 family.

The polypeptide is Small ribosomal subunit protein uS2 (Clostridium perfringens (strain ATCC 13124 / DSM 756 / JCM 1290 / NCIMB 6125 / NCTC 8237 / Type A)).